A 506-amino-acid polypeptide reads, in one-letter code: ESX-5 secretion system ATPase EccB5 (506 aa).

Residues 56–76 (VVASVSAALVICLGALLWSFI) traverse the membrane as a helical segment.

The protein belongs to the EccB family. Part of the ESX-5 / type VII secretion system (T7SS), which is composed of cytosolic and membrane components. The ESX-5 membrane complex is composed of EccB5, EccC5, EccD5 and EccE5.

The protein localises to the cell inner membrane. Functionally, an ATPase. Part of the ESX-5 specialized secretion system, which is responsible for the secretion of EsxN and a number of PE_PGRS and PPE proteins, including PPE41. In Mycobacterium tuberculosis (strain CDC 1551 / Oshkosh), this protein is ESX-5 secretion system ATPase EccB5.